Consider the following 249-residue polypeptide: NADH-quinone oxidoreductase subunit C (249 aa).

Residues 1-29 (MTENQTTPDPGEPGSSADRPGGLVPTGDS) form a disordered region.

This sequence belongs to the complex I 30 kDa subunit family. NDH-1 is composed of 14 different subunits. Subunits NuoB, C, D, E, F, and G constitute the peripheral sector of the complex.

It localises to the cell membrane. It catalyses the reaction a quinone + NADH + 5 H(+)(in) = a quinol + NAD(+) + 4 H(+)(out). Its function is as follows. NDH-1 shuttles electrons from NADH, via FMN and iron-sulfur (Fe-S) centers, to quinones in the respiratory chain. The immediate electron acceptor for the enzyme in this species is believed to be a menaquinone. Couples the redox reaction to proton translocation (for every two electrons transferred, four hydrogen ions are translocated across the cytoplasmic membrane), and thus conserves the redox energy in a proton gradient. This chain is NADH-quinone oxidoreductase subunit C, found in Saccharopolyspora erythraea (strain ATCC 11635 / DSM 40517 / JCM 4748 / NBRC 13426 / NCIMB 8594 / NRRL 2338).